The sequence spans 275 residues: MGLKRFKPTTPGRRFMIIPDFSEITKTKPEKSLVVPLKKSAGRNHHGRVTVRFRGGGHKRLYRIVDFRRWEKENIPAKVASIEYDPNRTARIALLIYADGEKRYILAPNGLNVGDTVMSGPEAEIKPGNALPLENIPVGTIVHSIEFLPRGGAKIARSAGVACQLMAKEGNYALLKMPSGELRKVHIKCYATVGVVGNEDHKNEVSGKAGRERWKGRKPHVRGVVMNPVDHPHGGGEGRGKGHHPQSPWGVPAKGYKTRRGKRASDKFIVRRRNG.

Residues 223-275 (GVVMNPVDHPHGGGEGRGKGHHPQSPWGVPAKGYKTRRGKRASDKFIVRRRNG) are disordered. Positions 230–240 (DHPHGGGEGRG) are enriched in basic and acidic residues.

The protein belongs to the universal ribosomal protein uL2 family. As to quaternary structure, part of the 50S ribosomal subunit. Forms a bridge to the 30S subunit in the 70S ribosome.

One of the primary rRNA binding proteins. Required for association of the 30S and 50S subunits to form the 70S ribosome, for tRNA binding and peptide bond formation. It has been suggested to have peptidyltransferase activity; this is somewhat controversial. Makes several contacts with the 16S rRNA in the 70S ribosome. The chain is Large ribosomal subunit protein uL2 from Fervidobacterium nodosum (strain ATCC 35602 / DSM 5306 / Rt17-B1).